The sequence spans 528 residues: GTPase Obg (528 aa).

The Obg domain occupies 2 to 159 (ASFVDRVVLH…SDIVLELKSI (158 aa)). The region spanning 160–343 (ADIALVGFPS…LGFAMAEIVQ (184 aa)) is the OBG-type G domain. GTP is bound by residues 166-173 (GFPSAGKS), 191-195 (FTTLI), 212-215 (DVPG), 295-298 (NKVD), and 324-326 (SAT). 2 residues coordinate Mg(2+): serine 173 and threonine 193. Residues 363–447 (PRAVNESGFK…DDGVVFDWEP (85 aa)) enclose the OCT domain. Positions 471-490 (DRPTRSQKRDEQIERREAKA) are disordered.

This sequence belongs to the TRAFAC class OBG-HflX-like GTPase superfamily. OBG GTPase family. As to quaternary structure, monomer. The cofactor is Mg(2+).

The protein localises to the cytoplasm. In terms of biological role, an essential GTPase which binds GTP, GDP and possibly (p)ppGpp with moderate affinity, with high nucleotide exchange rates and a fairly low GTP hydrolysis rate. Plays a role in control of the cell cycle, stress response, ribosome biogenesis and in those bacteria that undergo differentiation, in morphogenesis control. This Paenarthrobacter aurescens (strain TC1) protein is GTPase Obg.